Consider the following 361-residue polypeptide: Phosphate acyltransferase (361 aa).

Belongs to the PlsX family. As to quaternary structure, homodimer. Probably interacts with PlsY.

It is found in the cytoplasm. The catalysed reaction is a fatty acyl-[ACP] + phosphate = an acyl phosphate + holo-[ACP]. It functions in the pathway lipid metabolism; phospholipid metabolism. Its function is as follows. Catalyzes the reversible formation of acyl-phosphate (acyl-PO(4)) from acyl-[acyl-carrier-protein] (acyl-ACP). This enzyme utilizes acyl-ACP as fatty acyl donor, but not acyl-CoA. This chain is Phosphate acyltransferase, found in Parvibaculum lavamentivorans (strain DS-1 / DSM 13023 / NCIMB 13966).